Consider the following 110-residue polypeptide: Nucleoid-associated protein YpAngola_A2890 (110 aa).

The segment at 90–110 (KEKMASVSNGMQLPPGFKMPF) is disordered.

This sequence belongs to the YbaB/EbfC family. As to quaternary structure, homodimer.

It is found in the cytoplasm. It localises to the nucleoid. Functionally, binds to DNA and alters its conformation. May be involved in regulation of gene expression, nucleoid organization and DNA protection. The polypeptide is Nucleoid-associated protein YpAngola_A2890 (Yersinia pestis bv. Antiqua (strain Angola)).